The primary structure comprises 159 residues: ATP synthase subunit delta, mitochondrial (159 aa).

Residues 1-23 (MFRLSAARTLAKSVNTVVAKRTY) constitute a mitochondrion transit peptide.

The protein belongs to the ATPase epsilon chain family. F-type ATPases have 2 components, CF(1) - the catalytic core - and CF(0) - the membrane proton channel. CF(1) has five subunits: alpha(3), beta(3), gamma(1), delta(1), epsilon(1). CF(0) has three main subunits: a, b and c.

The protein localises to the mitochondrion. It localises to the mitochondrion inner membrane. In terms of biological role, mitochondrial membrane ATP synthase (F(1)F(0) ATP synthase or Complex V) produces ATP from ADP in the presence of a proton gradient across the membrane which is generated by electron transport complexes of the respiratory chain. F-type ATPases consist of two structural domains, F(1) - containing the extramembraneous catalytic core, and F(0) - containing the membrane proton channel, linked together by a central stalk and a peripheral stalk. During catalysis, ATP turnover in the catalytic domain of F(1) is coupled via a rotary mechanism of the central stalk subunits to proton translocation. Part of the complex F(1) domain and of the central stalk which is part of the complex rotary element. Rotation of the central stalk against the surrounding alpha(3)beta(3) subunits leads to hydrolysis of ATP in three separate catalytic sites on the beta subunits. In Kluyveromyces lactis (strain ATCC 8585 / CBS 2359 / DSM 70799 / NBRC 1267 / NRRL Y-1140 / WM37) (Yeast), this protein is ATP synthase subunit delta, mitochondrial (ATP16).